A 210-amino-acid polypeptide reads, in one-letter code: Putative cutinase (210 aa).

Basic and acidic residues predominate over residues 26–38 (DSERLPLKRDEPG). The segment at 26–58 (DSERLPLKRDEPGSRSMRSTFIPSSQCSNLSSA) is disordered. The segment covering 49 to 58 (SSQCSNLSSA) has biased composition (low complexity).

It catalyses the reaction cutin + H2O = cutin monomers.. This chain is Putative cutinase, found in Phytophthora capsici.